A 287-amino-acid chain; its full sequence is Protease HtpX (287 aa).

2 consecutive transmembrane segments (helical) span residues 4–24 (VLLF…VFNI) and 37–57 (VGLL…SLWI). Residue His-143 coordinates Zn(2+). Glu-144 is a catalytic residue. His-147 contacts Zn(2+). A run of 2 helical transmembrane segments spans residues 158–178 (LIQG…ASAI) and 194–214 (GVVM…VMWF). Glu-219 provides a ligand contact to Zn(2+).

The protein belongs to the peptidase M48B family. It depends on Zn(2+) as a cofactor.

The protein resides in the cell inner membrane. The polypeptide is Protease HtpX (Idiomarina loihiensis (strain ATCC BAA-735 / DSM 15497 / L2-TR)).